The sequence spans 121 residues: Large ribosomal subunit protein bL12 (121 aa).

The protein belongs to the bacterial ribosomal protein bL12 family. In terms of assembly, homodimer. Part of the ribosomal stalk of the 50S ribosomal subunit. Forms a multimeric L10(L12)X complex, where L10 forms an elongated spine to which 2 to 4 L12 dimers bind in a sequential fashion. Binds GTP-bound translation factors.

Its function is as follows. Forms part of the ribosomal stalk which helps the ribosome interact with GTP-bound translation factors. Is thus essential for accurate translation. This Lachnospira eligens (strain ATCC 27750 / DSM 3376 / VPI C15-48 / C15-B4) (Eubacterium eligens) protein is Large ribosomal subunit protein bL12.